A 106-amino-acid chain; its full sequence is Violacin-A (106 aa).

The signal sequence occupies residues methionine 1–alanine 29. Residues valine 30 to aspartate 79 constitute a propeptide that is removed on maturation. Disulfide bonds link cysteine 84–cysteine 98, cysteine 88–cysteine 100, and cysteine 93–cysteine 105.

It belongs to the cyclotide family. Moebius subfamily. Violacin-A is not a cyclic peptide.

Functionally, probably participates in a plant defense mechanism. Has low hemolytic activity. The protein is Violacin-A of Viola odorata (Sweet violet).